The chain runs to 398 residues: ATP-dependent RNA helicase eIF4A (398 aa).

The Q motif motif lies at 25–53; it reads DSFDTMNLKPELLRGVYAYGFERPSAIQQ. The Helicase ATP-binding domain maps to 56–226; the sequence is IMPVIKGHDV…TKFMRDPVRI (171 aa). 69 to 76 provides a ligand contact to ATP; the sequence is AQSGTGKT. Positions 174-177 match the DEAD box motif; the sequence is DEAD. One can recognise a Helicase C-terminal domain in the interval 237 to 398; that stretch reads GIKQFYIAVE…EMPMNVADLI (162 aa).

It belongs to the DEAD box helicase family. eIF4A subfamily. In terms of assembly, component of the eIF4F complex, which composition varies with external and internal environmental conditions. It is composed of at least eIF4A, eIF4E and eIF4G.

It is found in the cytoplasm. The catalysed reaction is ATP + H2O = ADP + phosphate + H(+). Functionally, ATP-dependent RNA helicase which is a subunit of the eIF4F complex involved in cap recognition and is required for mRNA binding to ribosome. In the current model of translation initiation, eIF4A unwinds RNA secondary structures in the 5'-UTR of mRNAs which is necessary to allow efficient binding of the small ribosomal subunit, and subsequent scanning for the initiator codon. This chain is ATP-dependent RNA helicase eIF4A (tif1), found in Sclerotinia sclerotiorum (strain ATCC 18683 / 1980 / Ss-1) (White mold).